Here is a 239-residue protein sequence, read N- to C-terminus: Serine protease SplC (239 aa).

The signal sequence occupies residues 1–36 (MNKNIVIKSMAALAILTSVTGINAAVVEETQQIANA). Active-site charge relay system residues include histidine 75, aspartate 113, and serine 193.

It belongs to the peptidase S1B family.

It is found in the secreted. This Staphylococcus aureus protein is Serine protease SplC (splC).